Here is a 445-residue protein sequence, read N- to C-terminus: Tubulin beta-4 chain (445 aa).

Residues Q11, E69, S138, G142, T143, G144, N204, and N226 each contribute to the GTP site. Mg(2+) is bound at residue E69. Residues E421–E445 form a disordered region. Acidic residues predominate over residues T429 to E445.

This sequence belongs to the tubulin family. In terms of assembly, dimer of alpha and beta chains. A typical microtubule is a hollow water-filled tube with an outer diameter of 25 nm and an inner diameter of 15 nM. Alpha-beta heterodimers associate head-to-tail to form protofilaments running lengthwise along the microtubule wall with the beta-tubulin subunit facing the microtubule plus end conferring a structural polarity. Microtubules usually have 13 protofilaments but different protofilament numbers can be found in some organisms and specialized cells. Requires Mg(2+) as cofactor.

It is found in the cytoplasm. The protein localises to the cytoskeleton. In terms of biological role, tubulin is the major constituent of microtubules, a cylinder consisting of laterally associated linear protofilaments composed of alpha- and beta-tubulin heterodimers. Microtubules grow by the addition of GTP-tubulin dimers to the microtubule end, where a stabilizing cap forms. Below the cap, tubulin dimers are in GDP-bound state, owing to GTPase activity of alpha-tubulin. This chain is Tubulin beta-4 chain (TUBB4), found in Triticum aestivum (Wheat).